The chain runs to 390 residues: Transaldolase (390 aa).

Lys135 serves as the catalytic Schiff-base intermediate with substrate. 2 consecutive EF-hand domains span residues 329-364 (AFCH…FDAL) and 365-388 (DHDH…LALT). Ca(2+) is bound by residues Asp342, Asp344, Asp346, Cys348, Glu353, Asp365, Asp367, Asp369, Arg371, and Asp376.

It belongs to the transaldolase family. Type 1 subfamily.

The protein localises to the cytoplasm. The enzyme catalyses D-sedoheptulose 7-phosphate + D-glyceraldehyde 3-phosphate = D-erythrose 4-phosphate + beta-D-fructose 6-phosphate. It functions in the pathway carbohydrate degradation; pentose phosphate pathway; D-glyceraldehyde 3-phosphate and beta-D-fructose 6-phosphate from D-ribose 5-phosphate and D-xylulose 5-phosphate (non-oxidative stage): step 2/3. Transaldolase is important for the balance of metabolites in the pentose-phosphate pathway. This is Transaldolase from Prochlorococcus marinus (strain MIT 9313).